Consider the following 80-residue polypeptide: Exodeoxyribonuclease 7 small subunit (80 aa).

This sequence belongs to the XseB family. In terms of assembly, heterooligomer composed of large and small subunits.

The protein resides in the cytoplasm. The catalysed reaction is Exonucleolytic cleavage in either 5'- to 3'- or 3'- to 5'-direction to yield nucleoside 5'-phosphates.. Bidirectionally degrades single-stranded DNA into large acid-insoluble oligonucleotides, which are then degraded further into small acid-soluble oligonucleotides. In Pseudomonas putida (strain GB-1), this protein is Exodeoxyribonuclease 7 small subunit.